Reading from the N-terminus, the 869-residue chain is MSSCKTTLSEMVGSVTKDRGTINVKARTRSSNVTFKPPVTHDMVRSLFDPTLKKSLLEKCIALAIISNFFICYWVFQRFGLQFTKYFFLVQYLFWRIAYNLGIGLVLHYQSHYETLTNCAKTHAIFSKIPHNKDANSNFSTNSNSFSEKFWNFIRKFCQYEIRSKMPKEYDLFAYPEEINVWLIFRQFVDLILMQDFVTYIIYVYLSIPYSWVQIFNWRSLLGVILILFNIWVKLDAHRVVKDYAWYWGDFFFLEESELIFDGVFNISPHPMYSIGYLGYYGLSLICNDYKVLLVSVFGHYSQFLFLKYVENPHIERTYGDGTDSDSQMNSRIDDLISKENYDYSRPLINMGLSFNNFNKLRFTDYFTIGTVAALMLGAIMNARFINLNYLFITVFVTKLVSWLFISTILYKQSQSKWFTRLFLENGYTQVYSYEQWQFIYNYYLVLTYTLMIIYTGLQIWSNFSNINNSQLIFGLILVALQTWCDKETRLAISDFGWFYGDFFLSNYISTRKLTSQGIYRYLNHPEAVLGVVGVWGTVLMTNFAVTNIILAVLWTLTNFILVKFIETPHVNKIYGKTKRVSGVGKTLLGLKPLRQVSDIVNRIENIIIKSLVDESKNSNGGAELLPKNYQDNKEWNILIQEAMDSVATRLSPYCELKIENEQIETNFVLPTPVTLNWKMPIELYNGDDWIGLYKVIDTRADREKTRVGSGGHWSATSKDSYMNHGLRHKESVTEIKATEKYVQGKVTFDTSLLYFENGIYEFRYHSGNSHKVLLISTPFEISLPVLNTTTPELFEKDLTEFLTKVNVLKDGKFRPLGNKFFGMDSLKQLIKNSIGVELSSEYMRRVNGDAHIISHRAWDIKQTLDSLA.

Ser2 carries the post-translational modification N-acetylserine. The Lumenal portion of the chain corresponds to Ser2–Ser55. The helical transmembrane segment at Leu56–Phe76 threads the bilayer. Topologically, residues Gln77–Tyr86 are cytoplasmic. A helical transmembrane segment spans residues Phe87–Leu107. At His108 to Gln187 the chain is on the lumenal side. Residues Phe188–Ile208 form a helical membrane-spanning segment. The Cytoplasmic segment spans residues Pro209 to Trp212. Residues Val213–Val233 traverse the membrane as a helical segment. At Lys234–Glu258 the chain is on the lumenal side. The helical transmembrane segment at Leu259–Gly279 threads the bilayer. The Cytoplasmic segment spans residues Tyr280–Lys291. The helical transmembrane segment at Val292–Val310 threads the bilayer. The Lumenal segment spans residues Glu311 to Arg362. Residues Phe363–Ala383 traverse the membrane as a helical segment. The Cytoplasmic portion of the chain corresponds to Arg384–Asn389. Residues Tyr390–Leu410 traverse the membrane as a helical segment. The Lumenal portion of the chain corresponds to Tyr411–Phe439. The helical transmembrane segment at Ile440–Ile460 threads the bilayer. At Trp461–Asn463 the chain is on the cytoplasmic side. Residues Phe464–Trp484 traverse the membrane as a helical segment. Topologically, residues Cys485–Gly534 are lumenal. Residues Val535–Trp555 traverse the membrane as a helical segment. Over Thr556–Ala869 the chain is Cytoplasmic.

The protein belongs to the class VI-like SAM-binding methyltransferase superfamily. CHO2 family.

The protein resides in the endoplasmic reticulum membrane. The catalysed reaction is a 1,2-diacyl-sn-glycero-3-phosphoethanolamine + S-adenosyl-L-methionine = a 1,2-diacyl-sn-glycero-3-phospho-N-methylethanolamine + S-adenosyl-L-homocysteine + H(+). It participates in phospholipid metabolism; phosphatidylcholine biosynthesis. In terms of biological role, catalyzes the first step of the methylation pathway of phosphatidylcholine biosynthesis, the SAM-dependent methylation of phosphatidylethanolamine (PE) to phosphatidylmonomethylethanolamine (PMME). The sequence is that of Phosphatidylethanolamine N-methyltransferase (CHO2) from Saccharomyces cerevisiae (strain YJM789) (Baker's yeast).